The chain runs to 47 residues: Antimicrobial peptide LCI (47 aa).

The protein localises to the secreted. Functionally, has antibacterial activity against X.oryzae pv oryzae and R.solanacearum, but not E.coli or P.carotovorum subsp carotovorum. May bind DNA or mRNA. The protein is Antimicrobial peptide LCI of Bacillus subtilis.